Reading from the N-terminus, the 159-residue chain is Cyclic pyranopterin monophosphate synthase (159 aa).

Residues 74–76 and 112–113 each bind substrate; these read MCH and ME. Aspartate 127 is an active-site residue.

This sequence belongs to the MoaC family. As to quaternary structure, homohexamer; trimer of dimers.

The enzyme catalyses (8S)-3',8-cyclo-7,8-dihydroguanosine 5'-triphosphate = cyclic pyranopterin phosphate + diphosphate. It participates in cofactor biosynthesis; molybdopterin biosynthesis. Its function is as follows. Catalyzes the conversion of (8S)-3',8-cyclo-7,8-dihydroguanosine 5'-triphosphate to cyclic pyranopterin monophosphate (cPMP). The protein is Cyclic pyranopterin monophosphate synthase of Helicobacter hepaticus (strain ATCC 51449 / 3B1).